The chain runs to 967 residues: Leucine--tRNA ligase (967 aa).

The short motif at 43–53 (PYLSGHLHVGH) is the 'HIGH' region element. Residues 650 to 654 (KMSKS) carry the 'KMSKS' region motif. Lysine 653 provides a ligand contact to ATP.

The protein belongs to the class-I aminoacyl-tRNA synthetase family.

It localises to the cytoplasm. The enzyme catalyses tRNA(Leu) + L-leucine + ATP = L-leucyl-tRNA(Leu) + AMP + diphosphate. The sequence is that of Leucine--tRNA ligase from Pyrococcus furiosus (strain ATCC 43587 / DSM 3638 / JCM 8422 / Vc1).